Here is a 268-residue protein sequence, read N- to C-terminus: Taurine import ATP-binding protein TauB (268 aa).

Positions 4-236 (LSINNLSMRF…LGVDSDLREV (233 aa)) constitute an ABC transporter domain. 41 to 48 (GPSGCGKT) lines the ATP pocket.

Belongs to the ABC transporter superfamily. Taurine importer (TC 3.A.1.17.1) family. The complex is composed of two ATP-binding proteins (TauB), two transmembrane proteins (TauC) and a solute-binding protein (TauA).

The protein resides in the cell inner membrane. It catalyses the reaction taurine(out) + ATP + H2O = taurine(in) + ADP + phosphate + H(+). Part of the ABC transporter complex TauABC involved in taurine import. Responsible for energy coupling to the transport system. In Roseobacter denitrificans (strain ATCC 33942 / OCh 114) (Erythrobacter sp. (strain OCh 114)), this protein is Taurine import ATP-binding protein TauB.